Consider the following 522-residue polypeptide: Sensory neuron membrane protein 1 (522 aa).

The Cytoplasmic segment spans residues 1-11 (MKLPKHLKFAA). The helical transmembrane segment at 12–32 (GAGGAFLFGILFGWVMFPAIL) threads the bilayer. Residues 33–455 (KGQLKKEMAL…KFQLFYPKKA (423 aa)) are Extracellular-facing. Residues Asn-67 and Asn-229 are each glycosylated (N-linked (GlcNAc...) asparagine). Intrachain disulfides connect Cys-268–Cys-333, Cys-297–Cys-350, and Cys-335–Cys-339. A glycan (N-linked (GlcNAc...) asparagine) is linked at Asn-438. The chain crosses the membrane as a helical span at residues 456-476 (VGVIKWLLVTFGGFGLIGCTI). The Cytoplasmic portion of the chain corresponds to 477–522 (YHYKDRIMSFASSPGSAAVTKVKPEEVEQKDVSVIGQPQEPAKINM).

This sequence belongs to the CD36 family.

The protein localises to the cell membrane. Plays an olfactory role that is not restricted to pheromone sensitivity. The polypeptide is Sensory neuron membrane protein 1 (Plutella xylostella (Diamondback moth)).